The primary structure comprises 256 residues: MTSDALKADPNRLIKIIASLSSTRELLSPEVTKADALEIRLDLITEPIDDALHSLRTSFQGPMVLTVRSSDEGGAYAGGSAGLWKKLEPYIGLVDIIDLEIRFKDHAPQVKEHNKAIIASCHQNRMPDDDEMQALIEELHSFGDIVKIAVQPQTKEDVIRLLKITAACPYPIIMSVTGTVYRYARPLLCLFGSLYTYCYIHSETSPGQYSLREMQLLAHLLSPGFVDPWFEGRPVRSGDASGYYERAEQYRKHLEF.

3-dehydroquinate is bound by residues Ser-19, 38-40, and Arg-68; that span reads EIR. The active-site Proton donor/acceptor is His-122. Lys-147 acts as the Schiff-base intermediate with substrate in catalysis. 3-dehydroquinate is bound by residues Arg-185, Thr-204, and Gln-208.

Belongs to the type-I 3-dehydroquinase family. In terms of assembly, homodimer.

It catalyses the reaction 3-dehydroquinate = 3-dehydroshikimate + H2O. It participates in metabolic intermediate biosynthesis; chorismate biosynthesis; chorismate from D-erythrose 4-phosphate and phosphoenolpyruvate: step 3/7. In terms of biological role, involved in the third step of the chorismate pathway, which leads to the biosynthesis of aromatic amino acids. Catalyzes the cis-dehydration of 3-dehydroquinate (DHQ) and introduces the first double bond of the aromatic ring to yield 3-dehydroshikimate. This is 3-dehydroquinate dehydratase from Methanospirillum hungatei JF-1 (strain ATCC 27890 / DSM 864 / NBRC 100397 / JF-1).